The chain runs to 146 residues: Large ribosomal subunit protein uL23m (146 aa).

Residues 108-146 are disordered; that stretch reads PDLFPEKEPTSPDPLEEELPQQRQSSDPRCPGIPSWFGL.

The protein belongs to the universal ribosomal protein uL23 family. In terms of assembly, component of the mitochondrial ribosome large subunit (39S) which comprises a 16S rRNA and about 50 distinct proteins.

It is found in the mitochondrion. This is Large ribosomal subunit protein uL23m (Mrpl23) from Rattus norvegicus (Rat).